The following is a 117-amino-acid chain: Putative cysteine proteinase inhibitor 7 (117 aa).

A signal peptide spans 1–24 (MTMRTSSLLLAAVAVVAIVAGATA). The region spanning 28-84 (GSWEPVDINDPHVQELGRWAVAEEDRGVAAGGLTFERVTDGEKQVVAGVNYRLTLEA) is the Cystatin domain. Residues 71 to 75 (QVVAG) carry the Secondary area of contact motif.

It belongs to the cystatin family. Phytocystatin subfamily.

It is found in the secreted. Specific inhibitor of cysteine proteinases. Probably involved in the regulation of endogenous processes and in defense against pests and pathogens. This chain is Putative cysteine proteinase inhibitor 7, found in Oryza sativa subsp. japonica (Rice).